The chain runs to 59 residues: MLNIFSLICLNSALYPSSLFFAKLPEAYAFLNPIVDVMPVIPLFFFLLAFVWQAAVSFR.

A propeptide spanning residues 1 to 22 is cleaved from the precursor; the sequence is MLNIFSLICLNSALYPSSLFFA. Residues 38-58 traverse the membrane as a helical segment; the sequence is MPVIPLFFFLLAFVWQAAVSF.

The protein belongs to the PsbK family. As to quaternary structure, PSII is composed of 1 copy each of membrane proteins PsbA, PsbB, PsbC, PsbD, PsbE, PsbF, PsbH, PsbI, PsbJ, PsbK, PsbL, PsbM, PsbT, PsbX, PsbY, PsbZ, Psb30/Ycf12, at least 3 peripheral proteins of the oxygen-evolving complex and a large number of cofactors. It forms dimeric complexes.

The protein resides in the plastid. It localises to the chloroplast thylakoid membrane. In terms of biological role, one of the components of the core complex of photosystem II (PSII). PSII is a light-driven water:plastoquinone oxidoreductase that uses light energy to abstract electrons from H(2)O, generating O(2) and a proton gradient subsequently used for ATP formation. It consists of a core antenna complex that captures photons, and an electron transfer chain that converts photonic excitation into a charge separation. This Lactuca sativa (Garden lettuce) protein is Photosystem II reaction center protein K.